Reading from the N-terminus, the 207-residue chain is Dephospho-CoA kinase (207 aa).

Residues 10 to 207 (ILGLTGGIGS…FYLTLRGGQS (198 aa)) form the DPCK domain. 18 to 23 (GSGKSA) is an ATP binding site.

The protein belongs to the CoaE family.

The protein resides in the cytoplasm. It catalyses the reaction 3'-dephospho-CoA + ATP = ADP + CoA + H(+). It participates in cofactor biosynthesis; coenzyme A biosynthesis; CoA from (R)-pantothenate: step 5/5. Its function is as follows. Catalyzes the phosphorylation of the 3'-hydroxyl group of dephosphocoenzyme A to form coenzyme A. In Pseudomonas savastanoi pv. phaseolicola (strain 1448A / Race 6) (Pseudomonas syringae pv. phaseolicola (strain 1448A / Race 6)), this protein is Dephospho-CoA kinase.